The chain runs to 87 residues: Small ribosomal subunit protein bS20 (87 aa).

This sequence belongs to the bacterial ribosomal protein bS20 family.

Binds directly to 16S ribosomal RNA. The sequence is that of Small ribosomal subunit protein bS20 from Alkaliphilus oremlandii (strain OhILAs) (Clostridium oremlandii (strain OhILAs)).